A 501-amino-acid polypeptide reads, in one-letter code: Beta-secretase 1 (501 aa).

An N-terminal signal peptide occupies residues 1–21; the sequence is MAPALHWLLLWVGSGMLPAQG. Positions 22–45 are excised as a propeptide; it reads THLGIRLPLRSGLAGPPLGLRLPR. At 22–457 the chain is on the extracellular side; that stretch reads THLGIRLPLR…PQTDESTLMT (436 aa). The interval 39–58 is disordered; the sequence is LGLRLPRETDEESEEPGRRG. The Peptidase A1 domain maps to 75-416; sequence YYVEMTVGSP…DRARKRIGFA (342 aa). D93 is an active-site residue. K126 is modified (N6-acetyllysine). N-linked (GlcNAc...) asparagine glycosylation is found at N153, N172, and N223. 3 cysteine pairs are disulfide-bonded: C216–C420, C278–C443, and C330–C380. N6-acetyllysine is present on residues K275, K279, and K285. The active site involves D289. An N6-acetyllysine mark is found at K299, K300, and K307. N-linked (GlcNAc...) asparagine glycosylation is present at N354. A helical membrane pass occupies residues 458–478; it reads IAYVMAAICALFMLPLCLMVC. Residues C474, C478, C482, and C485 are each lipidated (S-palmitoyl cysteine). At 479–501 the chain is on the cytoplasmic side; the sequence is QWRCLRCLRHQHDDFADDISLLK. Residues 479–501 form an interaction with RTN3 region; sequence QWRCLRCLRHQHDDFADDISLLK. Positions 496-500 match the DXXLL motif; it reads DISLL. Phosphoserine is present on S498. A Glycyl lysine isopeptide (Lys-Gly) (interchain with G-Cter in ubiquitin) cross-link involves residue K501.

It belongs to the peptidase A1 family. As to quaternary structure, monomer. Interacts (via DXXLL motif) with GGA1, GGA2 and GGA3 (via their VHS domain); the interaction highly increases when BACE1 is phosphorylated at Ser-498. Interacts with RTN1; RTN2; RTN3 and RTN4; the interaction leads to inhibition of amyloid precursor protein processing. Interacts with SNX6. Interacts with PCSK9. Interacts with NAT8 and NAT8B. Interacts with BIN1. Interacts (via extracellular domain) with ADAM10 (via extracellular domain). Interacts with SORL1; this interaction may affect binding with APP and hence reduce APP cleavage. Interacts with NRDC AND NRG1. Post-translationally, N-Glycosylated. Addition of a bisecting N-acetylglucosamine by MGAT3 blocks lysosomal targeting, further degradation and is required for maintaining stability under stress conditions. In terms of processing, palmitoylation mediates lipid raft localization. Acetylated in the endoplasmic reticulum at Lys-126, Lys-275, Lys-279, Lys-285, Lys-299, Lys-300 and Lys-307. Acetylation by NAT8 and NAT8B is transient and deacetylation probably occurs in the Golgi. Acetylation regulates the maturation, the transport to the plasma membrane, the stability and the expression of the protein. Post-translationally, ubiquitinated at Lys-501, ubiquitination leads to lysosomal degradation. Monoubiquitinated and 'Lys-63'-linked polyubitinated. Deubiquitnated by USP8; inhibits lysosomal degradation. In terms of processing, phosphorylation at Ser-498 is required for interaction with GGA1 and retrograded transport from endosomal compartments to the trans-Golgi network. Non-phosphorylated BACE1 enters a direct recycling route to the cell surface. In terms of tissue distribution, expressed in the brain, specifically in neurons and astrocytes (at protein level).

It localises to the cell membrane. It is found in the golgi apparatus. Its subcellular location is the trans-Golgi network. The protein localises to the endoplasmic reticulum. The protein resides in the endosome. It localises to the late endosome. It is found in the early endosome. Its subcellular location is the cell surface. The protein localises to the cytoplasmic vesicle membrane. The protein resides in the membrane raft. It localises to the lysosome. It is found in the recycling endosome. Its subcellular location is the cell projection. The protein localises to the axon. The protein resides in the dendrite. It catalyses the reaction Broad endopeptidase specificity. Cleaves Glu-Val-Asn-Leu-|-Asp-Ala-Glu-Phe in the Swedish variant of Alzheimer's amyloid precursor protein.. With respect to regulation, inhibited by RTN3 and RTN4. Responsible for the proteolytic processing of the amyloid precursor protein (APP). Cleaves at the N-terminus of the A-beta peptide sequence, between residues 671 and 672 of APP, leads to the generation and extracellular release of beta-cleaved soluble APP, and a corresponding cell-associated C-terminal fragment which is later released by gamma-secretase. Cleaves CHL1. The polypeptide is Beta-secretase 1 (Mus musculus (Mouse)).